A 207-amino-acid polypeptide reads, in one-letter code: Ribosome maturation factor RimP (207 aa).

It belongs to the RimP family.

Its subcellular location is the cytoplasm. Functionally, required for maturation of 30S ribosomal subunits. In Parvibaculum lavamentivorans (strain DS-1 / DSM 13023 / NCIMB 13966), this protein is Ribosome maturation factor RimP.